Here is a 104-residue protein sequence, read N- to C-terminus: UPF0145 protein STH1265 (104 aa).

This sequence belongs to the UPF0145 family.

This chain is UPF0145 protein STH1265, found in Symbiobacterium thermophilum (strain DSM 24528 / JCM 14929 / IAM 14863 / T).